We begin with the raw amino-acid sequence, 288 residues long: Borealin (288 aa).

Residues 1-58 are required for interaction with INCENP; the sequence is MAPKKRSSRGTRTNTLRSRKLASFLKDFDREVQVRTKQIESDRQTLLKEVENLYNIEV. A required for centromere localization region spans residues 1–88; it reads MAPKKRSSRG…NRQALEEAAT (88 aa). A required for interaction with SENP3 region spans residues 1 to 149; it reads MAPKKRSSRG…RKSHKNLRSA (149 aa). The interval 10-109 is required to form a minimal CPC core complex that localizes to the central spindle and midbody and properly executes the role of the CPC during cytokinesis; that stretch reads GTRTNTLRSR…TAEAIQTPLK (100 aa). The interval 20-78 is required for interaction with INCENP and BIRC5; it reads KLASFLKDFDREVQVRTKQIESDRQTLLKEVENLYNIEVLRLPKALQVMKWLDYFALGG. A Phosphothreonine; by TTK modification is found at Thr88. Citrulline is present on Arg91. A Phosphothreonine; by TTK modification is found at Thr94. Thr106 is subject to Phosphothreonine. Ser110 carries the post-translational modification Phosphoserine. Residues 124–134 are compositionally biased toward acidic residues; that stretch reads KEEEEDEEEEG. Residues 124–173 form a disordered region; the sequence is KEEEEDEEEEGGGGGGRKSHKNLRSARVKRCPPSKKRTQSIQGRSRSKRL. Basic residues predominate over residues 140–161; the sequence is RKSHKNLRSARVKRCPPSKKRT. A Glycyl lysine isopeptide (Lys-Gly) (interchain with G-Cter in SUMO2) cross-link involves residue Lys144. Residue Ser174 is modified to Phosphoserine; by AURKB. Thr197 and Thr212 each carry phosphothreonine. A phosphoserine mark is found at Ser227, Ser232, Ser246, and Ser252.

This sequence belongs to the borealin family. In terms of assembly, may form homooligomers and homodimers. Component of the chromosomal passenger complex (CPC) composed of at least BIRC5/survivin, CDCA8/borealin, INCENP, AURKB or AURKC; in the complex forms a triple-helix bundle-based subcomplex with INCENP and BIRC5. Interacts with SENP3, UBE2I and RANBP2. Interacts (phosphorylated) with SGO1 and SGO2; the association is dependent on CDK1. In terms of processing, phosphorylated by TTK, essentially at Thr-88 and Thr-94. Phosphorylation (probably by CDK1) promotes targeting of the CPC to centromeric DNA. Post-translationally, sumoylated by UBE2I and RANBP2. Desumoylated by SENP3 through the removal of SUMO2 and SUMO3. Citrullinated by PADI4.

Its subcellular location is the nucleus. The protein resides in the nucleolus. It localises to the cytoplasm. The protein localises to the chromosome. It is found in the centromere. Its subcellular location is the cytoskeleton. The protein resides in the spindle. Component of the chromosomal passenger complex (CPC), a complex that acts as a key regulator of mitosis. The CPC complex has essential functions at the centromere in ensuring correct chromosome alignment and segregation and is required for chromatin-induced microtubule stabilization and spindle assembly. In the complex, it may be required to direct the CPC to centromeric DNA. The protein is Borealin (Cdca8) of Rattus norvegicus (Rat).